The chain runs to 144 residues: Transcription antitermination protein NusB (144 aa).

Belongs to the NusB family.

Its function is as follows. Involved in transcription antitermination. Required for transcription of ribosomal RNA (rRNA) genes. Binds specifically to the boxA antiterminator sequence of the ribosomal RNA (rrn) operons. This Blochmanniella pennsylvanica (strain BPEN) protein is Transcription antitermination protein NusB.